Consider the following 1044-residue polypeptide: Outer dynein arm-docking complex subunit 2 (1044 aa).

Composition is skewed to basic and acidic residues over residues 317 to 338 and 379 to 401; these read IKFS…EVAI and SKDR…EKSR. Disordered stretches follow at residues 317 to 409 and 423 to 446; these read IKFS…PGRA and ISDS…ANAD. 5 HEAT repeats span residues 448-485, 487-527, 530-568, 627-665, and 668-706; these read PSEY…AQET, QLAI…NPQI, NIVD…FRRA, AIRK…EENY, and AIKA…DEET. ARM repeat units lie at residues 484–523, 525–564, 535–577, 622–661, 663–702, 746–785, 828–867, 871–910, 912–951, 953–992, and 1004–1031; these read ETCQ…EISH, PQIR…NVAK, GGLP…RHGG, YANK…ECAS, ENYR…QCAE, KENV…ECCQ, PESM…PCIQ, DAGE…NIAK, QENL…RCCM, GRNR…QLSE, and GAVK…ISNI. HEAT repeat units follow at residues 831–870, 874–914, 916–955, 958–996, and 999–1037; these read MMII…QNAK, EMVR…DQEN, AVIT…WGRN, AFGE…DADN, and TMHE…LALA.

In terms of assembly, component of the outer dynein arm-docking complex along with ODAD1, ODAD3, ODAD4 and CLXN. Interacts with CFAP61. Expressed in trachea multiciliated cells.

The protein localises to the cytoplasm. Its subcellular location is the cytoskeleton. It is found in the cilium axoneme. The protein resides in the cilium basal body. In terms of biological role, component of the outer dynein arm-docking complex (ODA-DC) that mediates outer dynein arms (ODA) binding onto the doublet microtubule. Involved in mediating assembly of both ODAs and their axonemal docking complex onto ciliary microtubules. This is Outer dynein arm-docking complex subunit 2 (ODAD2) from Bos taurus (Bovine).